Here is a 410-residue protein sequence, read N- to C-terminus: 3-phosphoshikimate 1-carboxyvinyltransferase (410 aa).

Residues Lys21, Ser22, and Arg26 each coordinate 3-phosphoshikimate. Residue Lys21 coordinates phosphoenolpyruvate. Phosphoenolpyruvate-binding residues include Gly69 and Arg97. The 3-phosphoshikimate site is built by Ser143, Ser144, Gln145, Ser171, Asp288, and Lys315. Gln145 contacts phosphoenolpyruvate. Asp288 (proton acceptor) is an active-site residue. The phosphoenolpyruvate site is built by Arg319, Arg364, and Lys389.

It belongs to the EPSP synthase family. In terms of assembly, monomer.

It localises to the cytoplasm. The enzyme catalyses 3-phosphoshikimate + phosphoenolpyruvate = 5-O-(1-carboxyvinyl)-3-phosphoshikimate + phosphate. It functions in the pathway metabolic intermediate biosynthesis; chorismate biosynthesis; chorismate from D-erythrose 4-phosphate and phosphoenolpyruvate: step 6/7. In terms of biological role, catalyzes the transfer of the enolpyruvyl moiety of phosphoenolpyruvate (PEP) to the 5-hydroxyl of shikimate-3-phosphate (S3P) to produce enolpyruvyl shikimate-3-phosphate and inorganic phosphate. This is 3-phosphoshikimate 1-carboxyvinyltransferase from Bacteroides fragilis (strain YCH46).